We begin with the raw amino-acid sequence, 129 residues long: Fluoride-specific ion channel FluC 2 (129 aa).

Residues 19–39 (GLGLVVPAAAVGGFPLGTLFI) form a helical membrane-spanning segment. Glycine 74 and threonine 77 together coordinate Na(+). A helical transmembrane segment spans residues 95 to 115 (FGMAAVYIAASLFGGLLASWA).

The protein belongs to the fluoride channel Fluc/FEX (TC 1.A.43) family.

It is found in the cell membrane. It catalyses the reaction fluoride(in) = fluoride(out). Na(+) is not transported, but it plays an essential structural role and its presence is essential for fluoride channel function. Fluoride-specific ion channel. Important for reducing fluoride concentration in the cell, thus reducing its toxicity. The sequence is that of Fluoride-specific ion channel FluC 2 from Geobacillus kaustophilus (strain HTA426).